A 972-amino-acid polypeptide reads, in one-letter code: Peptidyl-glycine alpha-amidating monooxygenase (972 aa).

The signal sequence occupies residues 1–20 (MAGFRSLLVLLLVFPSGCVG). The interval 1–494 (MAGFRSLLVL…EGTWEPEHTG (494 aa)) is peptidylglycine alpha-hydroxylating monooxygenase. A propeptide spanning residues 21–30 (FRSPLSVFKR) is cleaved from the precursor. The Intragranular portion of the chain corresponds to 31-873 (FKETTRSFSN…VPAVLITTLL (843 aa)). Intrachain disulfides connect Cys42–Cys181, Cys76–Cys121, Cys109–Cys126, Cys222–Cys329, and Cys288–Cys310. His102 and His103 together coordinate Cu(2+). The Cu(2+) site is built by His167, His237, His239, and Met309. The segment at 495 to 817 (DFHVEEALDW…STEKMEHRSV (323 aa)) is peptidyl-alpha-hydroxyglycine alpha-amidating lyase. NHL repeat units lie at residues 498 to 541 (VEEA…NSFD), 567 to 608 (AAVL…LDPK), 617 to 662 (LGRS…FSPS), and 670 to 714 (GEAS…FKTD). Val517 serves as a coordination point for Ca(2+). A protein is bound at residue Arg530. Residue His582 participates in Zn(2+) binding. A Ca(2+)-binding site is contributed by Leu584. A disulfide bond links Cys631 and Cys652. Tyr651 provides a ligand contact to a protein. Position 687 (His687) interacts with Zn(2+). A disulfide bond links Cys699 and Cys710. Arg703 is an a protein binding site. A glycan (N-linked (GlcNAc...) asparagine) is linked at Asn762. An NHL 5 repeat occupies 766-809 (GEIIDVFKPVRKHFDMPHDIAASEDGTVYVGDAHTNTVWKFTST). A Zn(2+)-binding site is contributed by His783. Asp784 provides a ligand contact to Ca(2+). The chain crosses the membrane as a helical span at residues 874 to 897 (VIPVVVLLAIALFIRWKKSRAFGD). Residues 898–972 (SERKLEASSG…APPPAPAPSS (75 aa)) are Cytoplasmic-facing. The segment at 925-942 (NFFASRKGYSRKGFDRLS) is interaction with RASSF9. Ser929 and Ser942 each carry phosphoserine. The tract at residues 937 to 972 (GFDRLSTEGSDQEKDEDASESEEEYSAPPPAPAPSS) is disordered. A Phosphothreonine modification is found at Thr943. Ser946 is subject to Phosphoserine; by UHMK1. Over residues 949 to 961 (EKDEDASESEEEY) the composition is skewed to acidic residues. At Ser957 the chain carries Phosphoserine. Residues 963–972 (APPPAPAPSS) are compositionally biased toward pro residues.

It in the C-terminal section; belongs to the peptidyl-alpha-hydroxyglycine alpha-amidating lyase family. The protein in the N-terminal section; belongs to the copper type II ascorbate-dependent monooxygenase family. In terms of assembly, monomer. Interacts with RASSF9. Zn(2+) serves as cofactor. Requires Cu(2+) as cofactor.

The protein localises to the cytoplasmic vesicle. It localises to the secretory vesicle membrane. It carries out the reaction a [peptide]-C-terminal glycine + 2 L-ascorbate + O2 = a [peptide]-C-terminal (2S)-2-hydroxyglycine + 2 monodehydro-L-ascorbate radical + H2O. The catalysed reaction is a [peptide]-C-terminal (2S)-2-hydroxyglycine = a [peptide]-C-terminal amide + glyoxylate. The enzyme catalyses N-dodecanoylglycine + 2 L-ascorbate + O2 = N-dodecanoyl-(2S)-hydroxyglycine + 2 monodehydro-L-ascorbate radical + H2O. It catalyses the reaction N-dodecanoyl-(2S)-hydroxyglycine = dodecanamide + glyoxylate. It carries out the reaction N-(9Z,12Z,15Z)-octadecatrienoylglycine + 2 L-ascorbate + O2 = N-(9Z,12Z,15Z)-octadecatrienoyl-(2S)-hydroxyglycine + 2 monodehydro-L-ascorbate radical + H2O. The catalysed reaction is N-(9Z,12Z,15Z)-octadecatrienoyl-(2S)-hydroxyglycine = (9Z,12Z,15Z)-octadecatrienamide + glyoxylate. The enzyme catalyses N-(9Z-octadecenoyl)glycine + 2 L-ascorbate + O2 = N-(9Z-octadecenoyl)-(2S)-hydroxyglycine + 2 monodehydro-L-ascorbate radical + H2O. It catalyses the reaction N-(9Z-octadecenoyl)-(2S)-hydroxyglycine = (9Z)-octadecenamide + glyoxylate. It carries out the reaction N-tetradecanoylglycine + 2 L-ascorbate + O2 = N-tetradecanoyl-(2S)-hydroxyglycine + 2 monodehydro-L-ascorbate radical + H2O. The catalysed reaction is N-tetradecanoyl-(2S)-hydroxyglycine = tetradecamide + glyoxylate. The enzyme catalyses N-decanoylglycine + 2 L-ascorbate + O2 = N-decanoyl-(2S)-hydroxyglycine + 2 monodehydro-L-ascorbate radical + H2O. It catalyses the reaction N-decanoyl-(2S)-hydroxyglycine = decanamide + glyoxylate. It carries out the reaction N-octanoylglycine + 2 L-ascorbate + O2 = N-octanoyl-(2S)-hydroxyglycine + 2 monodehydro-L-ascorbate radical + H2O. The catalysed reaction is N-octanoyl-(2S)-hydroxyglycine = octanamide + glyoxylate. With respect to regulation, PAM activity is inhibited by EDTA, phenylglyoxal and diethyl pyrocarbonate. PAL activity is stimulated by cadmium and inhibited by mercury. Functionally, bifunctional enzyme that catalyzes amidation of the C-terminus of proteins. Alpha-amidation is present at the C-terminus of many endocrine hormones and neuropeptides and is required for their activity. C-terminal amidation also takes place in response to protein fragmentation triggered by oxidative stress, promoting degradation of amidated protein fragments by the proteasome. Alpha-amidation involves two sequential reactions, both of which are catalyzed by separate catalytic domains of the enzyme. The first step, catalyzed by peptidyl alpha-hydroxylating monooxygenase (PHM) domain, is the copper-, ascorbate-, and O2- dependent stereospecific hydroxylation (with S stereochemistry) at the alpha-carbon (C-alpha) of the C-terminal glycine of the peptidylglycine substrate. The second step, catalyzed by the peptidylglycine amidoglycolate lyase (PAL) domain, is the zinc-dependent cleavage of the N-C-alpha bond, producing the alpha-amidated peptide and glyoxylate. Similarly, catalyzes the two-step conversion of an N-fatty acylglycine to a primary fatty acid amide and glyoxylate. This Bos taurus (Bovine) protein is Peptidyl-glycine alpha-amidating monooxygenase (PAM).